Here is a 297-residue protein sequence, read N- to C-terminus: Homoserine kinase (297 aa).

82 to 92 (PLTRGLGSSAS) contributes to the ATP binding site.

This sequence belongs to the GHMP kinase family. Homoserine kinase subfamily.

The protein resides in the cytoplasm. The catalysed reaction is L-homoserine + ATP = O-phospho-L-homoserine + ADP + H(+). It functions in the pathway amino-acid biosynthesis; L-threonine biosynthesis; L-threonine from L-aspartate: step 4/5. Catalyzes the ATP-dependent phosphorylation of L-homoserine to L-homoserine phosphate. The sequence is that of Homoserine kinase from Bacillus thuringiensis (strain Al Hakam).